A 162-amino-acid chain; its full sequence is MSDTAVADTRRLNSKPQDLTDAYGPPSNFLEIDIFNPQTVGVGRARFTTYEVRMRTNLPIFKLKESCVRRRYSDFEWLKNELERDSKIVVPPLPGKALKRQLPFRGDEGIFEESFIEERRQGLEQFINKIAGHPLAQNERCLHMFLQEEAIDRNYVPGKVRQ.

A disordered region spans residues 1–20 (MSDTAVADTRRLNSKPQDLT). Residue Ser2 is modified to N-acetylserine. Tyr23 bears the Phosphotyrosine mark. One can recognise a PX domain in the interval 28–152 (NFLEIDIFNP…HMFLQEEAID (125 aa)). 4 residues coordinate a 1,2-diacyl-sn-glycero-3-phospho-(1D-myo-inositol-3-phosphate): Arg71, Ser73, Lys96, and Arg119. Ser73 is modified (phosphoserine).

It belongs to the sorting nexin family.

It is found in the membrane. Functionally, may be involved in several stages of intracellular trafficking. The sequence is that of Sorting nexin-12 (SNX12) from Homo sapiens (Human).